We begin with the raw amino-acid sequence, 161 residues long: Phosphopantetheine adenylyltransferase (161 aa).

Ser-10 is a substrate binding site. ATP contacts are provided by residues 10–11 (SF) and His-18. Residues Lys-42, Leu-74, and Arg-88 each contribute to the substrate site. ATP is bound by residues 88–89 (RG), Glu-99, and 124–130 (YSFLSSS).

This sequence belongs to the bacterial CoaD family. As to quaternary structure, homohexamer. It depends on Mg(2+) as a cofactor.

It is found in the cytoplasm. The catalysed reaction is (R)-4'-phosphopantetheine + ATP + H(+) = 3'-dephospho-CoA + diphosphate. The protein operates within cofactor biosynthesis; coenzyme A biosynthesis; CoA from (R)-pantothenate: step 4/5. Reversibly transfers an adenylyl group from ATP to 4'-phosphopantetheine, yielding dephospho-CoA (dPCoA) and pyrophosphate. This Bacillus subtilis (strain 168) protein is Phosphopantetheine adenylyltransferase.